The primary structure comprises 425 residues: E3 ubiquitin-protein ligase TRIM31 (425 aa).

The RING-type zinc-finger motif lies at 16 to 57 (CPICLDILQKPVTIDCGHNFCLKCITQIGETSCGFFKCPLCK). The B box-type zinc-finger motif lies at 90-131 (RKEATCPRHQEMFHYFCEDDGKFLCFVCRESKDHKSHNVSLI). 4 residues coordinate Zn(2+): Cys95, His98, Cys117, and His123. 2 coiled-coil regions span residues 126-162 (HNVSLIEEAAQNYQGQIQEQIQVLQQKEKETVQVKAQ) and 270-307 (LELEKKLSEAKSRHDSITGSLKKFKDQLQADRKKDENR). The segment at 328–360 (HKMNKTSEPGSSSAGGRTTSGPPNHHSSAPSHS) is disordered. Low complexity predominate over residues 336–360 (PGSSSAGGRTTSGPPNHHSSAPSHS).

The protein belongs to the TRIM/RBCC family. As to quaternary structure, may form oligomers. Interacts with isoform p52shc of SHC1. Auto-ubiquitinated (in vitro). In terms of tissue distribution, up-regulated in gastric adenocarcinomas.

The protein localises to the cytoplasm. Its subcellular location is the mitochondrion. It carries out the reaction S-ubiquitinyl-[E2 ubiquitin-conjugating enzyme]-L-cysteine + [acceptor protein]-L-lysine = [E2 ubiquitin-conjugating enzyme]-L-cysteine + N(6)-ubiquitinyl-[acceptor protein]-L-lysine.. It participates in protein modification; protein ubiquitination. E3 ubiquitin-protein ligase that acts as a regulator of antiviral immune response and inflammation by mediating ubiquitination of substrates. Acts as a regulator of innate immune defense against viruses by mediating 'Lys-63'-linked ubiquitination of MAVS, promoting MAVS polymerization and formation of three-stranded helical filaments on mitochondria. Acts as a negative regulator of the NLRP3 inflammasome by catalyzing 'Lys-48'-linked ubiquitination of NLRP3, leading to its degradation. Regulator of Src-induced anchorage independent cell growth. The protein is E3 ubiquitin-protein ligase TRIM31 of Homo sapiens (Human).